The primary structure comprises 312 residues: Polyamine aminopropyltransferase (312 aa).

In terms of domain architecture, PABS spans 7–247 (FFWAQEYFTP…GPLGFALAAQ (241 aa)). Glutamine 36 serves as a coordination point for S-methyl-5'-thioadenosine. Residues histidine 67 and glutamate 95 each coordinate spermidine. S-methyl-5'-thioadenosine is bound by residues aspartate 115 and 147-148 (DA). Residue aspartate 165 is the Proton acceptor of the active site. Residue proline 174 participates in S-methyl-5'-thioadenosine binding.

It belongs to the spermidine/spermine synthase family. Homodimer or homotetramer.

It localises to the cytoplasm. The enzyme catalyses S-adenosyl 3-(methylsulfanyl)propylamine + putrescine = S-methyl-5'-thioadenosine + spermidine + H(+). It functions in the pathway amine and polyamine biosynthesis; spermidine biosynthesis; spermidine from putrescine: step 1/1. Functionally, catalyzes the irreversible transfer of a propylamine group from the amino donor S-adenosylmethioninamine (decarboxy-AdoMet) to putrescine (1,4-diaminobutane) to yield spermidine. The sequence is that of Polyamine aminopropyltransferase from Synechococcus sp. (strain JA-3-3Ab) (Cyanobacteria bacterium Yellowstone A-Prime).